A 233-amino-acid polypeptide reads, in one-letter code: Bcl-2-like protein 1 (233 aa).

The BH4 motif lies at 4-24; sequence SNRELVVDFLSYKLSQKGYSW. The tract at residues 29–71 is disordered; it reads DVEENRTEAPEGTESEAETPSAINGNPSWHLADSPAVNGATGH. Ser49 is modified (phosphoserine; by PLK3). Position 62 is a phosphoserine; by CDK1 (Ser62). The short motif at 86-100 is the BH3 element; that stretch reads VKQALREAGDEFELR. The short motif at 129–148 is the BH1 element; sequence ELFRDGVNWGRIVAFFSFGG. The BH2 motif lies at 180–195; it reads PWIQENGGWDTFVELY. A helical transmembrane segment spans residues 210-226; the sequence is FNRWFLTGMTLAGVVLL.

Belongs to the Bcl-2 family. In terms of assembly, homodimer. Heterodimers with BAX, BAK or BCL2. Heterodimerization with BAX does not seem to be required for anti-apoptotic activity. Interacts with BCL2L11. Interacts with BAD. Interacts with SIVA1 isoform 1; the interaction inhibits the anti-apoptotic activity. Interacts with BECN1 and PGAM5. Interacts with IKZF3. Interacts with HEBP2. Interacts with BOP. Interacts with p53/TP53 and BBC3; interaction with BBC3 disrupts the interaction with p53/TP53. Interacts with DNM1L and CLTA; DNM1L and BCL2L1 may form a complex in synaptic vesicles that also contains clathrin and MFF. Interacts with ATP5F1A and ATP5F1B; the interactions mediate the association of BCL2L1 with the mitochondrial membrane ATP synthase F(1)F(0) ATP synthase. Interacts with VDAC1. Interacts (via the loop between motifs BH4 and BH3) with NLRP1 (via LRR repeats), but not with NLRP2, NLRP3, NLRP4, PYCARD, nor MEFV. Interacts with BCL2L11 (via BH3). Interacts with RNF183. Interacts with GIMAP3/IAN4. Interacts with GIMAP5 and HSPA8/HSC70; the interaction between HSPA8 and BCL2L1 is impaired in the absence of GIMAP5. Interacts with CLU (isoform 4); this interaction releases and activates BAX and promotes cell death. In terms of processing, proteolytically cleaved by caspases during apoptosis. The cleaved protein, lacking the BH4 motif, has pro-apoptotic activity. Phosphorylated on Ser-62 by CDK1. This phosphorylation is partial in normal mitotic cells, but complete in G2-arrested cells upon DNA-damage, thus promoting subsequent apoptosis probably by triggering caspases-mediated proteolysis. Phosphorylated by PLK3, leading to regulate the G2 checkpoint and progression to cytokinesis during mitosis. Phosphorylation at Ser-49 appears during the S phase and G2, disappears rapidly in early mitosis during prometaphase, metaphase and early anaphase, and re-appears during telophase and cytokinesis. Post-translationally, ubiquitinated by RNF183 during prolonged ER stress, leading to degradation by the proteosome.

The protein localises to the mitochondrion membrane. The protein resides in the nucleus membrane. It is found in the mitochondrion matrix. Its subcellular location is the cytoplasm. It localises to the cytoskeleton. The protein localises to the microtubule organizing center. The protein resides in the centrosome. It is found in the cytosol. Its subcellular location is the cytoplasmic vesicle. It localises to the secretory vesicle. The protein localises to the synaptic vesicle membrane. Its function is as follows. Potent inhibitor of cell death. Inhibits activation of caspases. Appears to regulate cell death by blocking the voltage-dependent anion channel (VDAC) by binding to it and preventing the release of the caspase activator, CYC1, from the mitochondrial membrane. Also acts as a regulator of G2 checkpoint and progression to cytokinesis during mitosis. Regulates presynaptic plasticity, including neurotransmitter release and recovery, number of axonal mitochondria as well as size and number of synaptic vesicle clusters. During synaptic stimulation, increases ATP availability from mitochondria through regulation of mitochondrial membrane ATP synthase F(1)F(0) activity and regulates endocytic vesicle retrieval in hippocampal neurons through association with DMN1L and stimulation of its GTPase activity in synaptic vesicles. May attenuate inflammation impairing NLRP1-inflammasome activation, hence CASP1 activation and IL1B release. This is Bcl-2-like protein 1 (BCL2L1) from Sus scrofa (Pig).